The primary structure comprises 378 residues: 4-hydroxy-3-methylbut-2-en-1-yl diphosphate synthase (flavodoxin) (378 aa).

Positions 268, 271, 303, and 310 each coordinate [4Fe-4S] cluster. Residues 359–378 (AEREKEKEKEKEKEKETQEQ) are disordered.

The protein belongs to the IspG family. It depends on [4Fe-4S] cluster as a cofactor.

The catalysed reaction is (2E)-4-hydroxy-3-methylbut-2-enyl diphosphate + oxidized [flavodoxin] + H2O + 2 H(+) = 2-C-methyl-D-erythritol 2,4-cyclic diphosphate + reduced [flavodoxin]. Its pathway is isoprenoid biosynthesis; isopentenyl diphosphate biosynthesis via DXP pathway; isopentenyl diphosphate from 1-deoxy-D-xylulose 5-phosphate: step 5/6. Functionally, converts 2C-methyl-D-erythritol 2,4-cyclodiphosphate (ME-2,4cPP) into 1-hydroxy-2-methyl-2-(E)-butenyl 4-diphosphate. This Bacillus cereus (strain ZK / E33L) protein is 4-hydroxy-3-methylbut-2-en-1-yl diphosphate synthase (flavodoxin).